The chain runs to 163 residues: Endoribonuclease YbeY (163 aa).

Positions 126, 130, and 136 each coordinate Zn(2+).

The protein belongs to the endoribonuclease YbeY family. The cofactor is Zn(2+).

Its subcellular location is the cytoplasm. Single strand-specific metallo-endoribonuclease involved in late-stage 70S ribosome quality control and in maturation of the 3' terminus of the 16S rRNA. The sequence is that of Endoribonuclease YbeY from Chelativorans sp. (strain BNC1).